Consider the following 502-residue polypeptide: Phenylalanine--tRNA ligase alpha subunit (502 aa).

L-phenylalanine contacts are provided by residues T339, 382–384 (QIE), and Y422. E424 provides a ligand contact to Mg(2+). F448 provides a ligand contact to L-phenylalanine.

It belongs to the class-II aminoacyl-tRNA synthetase family. Phe-tRNA synthetase alpha subunit type 2 subfamily. As to quaternary structure, tetramer of two alpha and two beta subunits. Requires Mg(2+) as cofactor.

It is found in the cytoplasm. The catalysed reaction is tRNA(Phe) + L-phenylalanine + ATP = L-phenylalanyl-tRNA(Phe) + AMP + diphosphate + H(+). In Halobacterium salinarum (strain ATCC 29341 / DSM 671 / R1), this protein is Phenylalanine--tRNA ligase alpha subunit.